Reading from the N-terminus, the 100-residue chain is ESAT-6-like protein EsxT (100 aa).

The protein belongs to the WXG100 family. ESAT-6 subfamily. In terms of assembly, forms a tight 1:1 complex with EsxU.

Its subcellular location is the secreted. The chain is ESAT-6-like protein EsxT from Mycobacterium tuberculosis (strain CDC 1551 / Oshkosh).